The chain runs to 379 residues: MLTPIQNFLKQEAAGGILLFIFATLAIILANTPLSYLYFDFLQTPVSVQIGAFIINKPLLMWVNDGLMAVFFMLVGMEVKRELLEGSLSSYQRAVFPAIAATGGMVVPAIVFLVFNATHPEFQEGWAIPMATDIAFALGVIALLGKRVPLALKIFLLALAIIDDLGAIVVIALFFSHDLSPQAFIFAGIAVAILITMNRLKITALSAYGIVGIILWASVLKSGVHATLAGVIIGFCIPLNGKKGERPLDDFEHTLSPWSAFAILPLFAFCNAGVSLIGMGMDNLTSTLPMGIALGLLLGKPLGIFSFCFVAVKLGIAKLSEGINFKQIFAVSVLCGIGFTMSMFLAGLAFGGESDSENVTALARLGILIGSGFSAVLGY.

12 helical membrane passes run 14–34, 59–79, 95–115, 125–145, 154–174, 175–195, 200–220, 221–241, 261–281, 292–312, 328–348, and 359–379; these read AGGI…NTPL, LLMW…GMEV, VFPA…FLVF, GWAI…ALLG, IFLL…IALF, FSHD…AILI, LKIT…ASVL, KSGV…PLNG, FAIL…GMGM, IALG…FVAV, IFAV…LAGL, and VTAL…VLGY.

It belongs to the NhaA Na(+)/H(+) (TC 2.A.33) antiporter family.

It is found in the cell inner membrane. The enzyme catalyses Na(+)(in) + 2 H(+)(out) = Na(+)(out) + 2 H(+)(in). Its function is as follows. Na(+)/H(+) antiporter that extrudes sodium in exchange for external protons. This chain is Na(+)/H(+) antiporter NhaA, found in Pasteurella multocida (strain Pm70).